A 161-amino-acid polypeptide reads, in one-letter code: Allophycocyanin beta chain (161 aa).

Asn71 bears the N4-methylasparagine mark. A (2R,3E)-phycocyanobilin-binding site is contributed by Cys81.

Belongs to the phycobiliprotein family. Heterodimer of an alpha and a beta chain. Post-translationally, contains one covalently linked phycocyanobilin chromophore.

It localises to the plastid. Its subcellular location is the cyanelle thylakoid membrane. Light-harvesting photosynthetic bile pigment-protein from the phycobiliprotein complex. Allophycocyanin has a maximum absorption at approximately 650 nanometers. The polypeptide is Allophycocyanin beta chain (apcB) (Cyanophora paradoxa).